The following is a 44-amino-acid chain: MKSLKIRFRRFLLEKLSFYFKLIKTFLEFISLLINSFAMGDLKY.

The protein localises to the plastid. Its subcellular location is the chloroplast. This is an uncharacterized protein from Trieres chinensis (Marine centric diatom).